We begin with the raw amino-acid sequence, 344 residues long: tRNA N6-adenosine threonylcarbamoyltransferase (344 aa).

Fe cation-binding residues include histidine 112 and histidine 116. Substrate-binding positions include 134–138 (LASGG), aspartate 167, glycine 180, and asparagine 280. Aspartate 308 contacts Fe cation.

It belongs to the KAE1 / TsaD family. Requires Fe(2+) as cofactor.

The protein resides in the cytoplasm. The enzyme catalyses L-threonylcarbamoyladenylate + adenosine(37) in tRNA = N(6)-L-threonylcarbamoyladenosine(37) in tRNA + AMP + H(+). Functionally, required for the formation of a threonylcarbamoyl group on adenosine at position 37 (t(6)A37) in tRNAs that read codons beginning with adenine. Is involved in the transfer of the threonylcarbamoyl moiety of threonylcarbamoyl-AMP (TC-AMP) to the N6 group of A37, together with TsaE and TsaB. TsaD likely plays a direct catalytic role in this reaction. The polypeptide is tRNA N6-adenosine threonylcarbamoyltransferase (Rickettsia rickettsii (strain Iowa)).